We begin with the raw amino-acid sequence, 333 residues long: Alpha-N-acetylgalactosaminide alpha-2,6-sialyltransferase 6 (333 aa).

The segment covering Met-1 to Pro-12 has biased composition (polar residues). A disordered region spans residues Met-1–Pro-27. At Met-1–Ser-43 the chain is on the cytoplasmic side. The chain crosses the membrane as a helical; Signal-anchor for type II membrane protein span at residues Ala-44–Ala-64. The Lumenal portion of the chain corresponds to Asn-65–Thr-333. A glycan (N-linked (GlcNAc...) asparagine) is linked at Asn-98. An intrachain disulfide couples Cys-108 to Cys-256.

It belongs to the glycosyltransferase 29 family. In terms of tissue distribution, widely expressed, the gene expression is most abundant in colon, brain, liver, and heart.

Its subcellular location is the golgi apparatus membrane. The catalysed reaction is a ganglioside GM1b (d18:1(4E)) + CMP-N-acetyl-beta-neuraminate = a ganglioside GD1alpha (d18:1(4E)) + CMP + H(+). The enzyme catalyses a ganglioside GD1a (d18:1(4E)) + CMP-N-acetyl-beta-neuraminate = a ganglioside GT1aalpha (d18:1(4E)) + CMP + H(+). It carries out the reaction a ganglioside GT1b (d18:1(4E)) + CMP-N-acetyl-beta-neuraminate = a ganglioside GQ1balpha (d18:1(4E)) + CMP + H(+). It catalyses the reaction N-acetyl-alpha-neuraminosyl-(2-&gt;3)-beta-D-galactosyl-(1-&gt;3)-N-acetyl-beta-D-glucosaminyl-(1-&gt;3)-beta-D-galactosyl-(1-&gt;4)-beta-D-glucosyl-(1&lt;-&gt;1')-N-acyl-sphing-4-enine + CMP-N-acetyl-beta-neuraminate = N-acetyl-alpha-neuraminosyl-(2-&gt;3)-beta-D-galactosyl-(1-&gt;3)-[N-acetyl-alpha-neuraminosyl-(2-&gt;6)]-N-acetyl-beta-D-glucosaminyl-(1-&gt;3)-beta-D-galactosyl-(1-&gt;4)-beta-D-glucosyl-(1&lt;-&gt;1')-N-acyl-sphing-4-enine + CMP + H(+). The catalysed reaction is a globoside MSGG + CMP-N-acetyl-beta-neuraminate = a globoside DSGG + CMP + H(+). The enzyme catalyses 3-O-[alpha-Neu5Ac-(2-&gt;3)-beta-D-Gal-(1-&gt;3)-alpha-D-GalNAc]-L-Ser-[protein] + CMP-N-acetyl-beta-neuraminate = a 3-O-{alpha-Neu5Ac-(2-&gt;3)-beta-D-Gal-(1-&gt;3)-[alpha-Neu5Ac-(2-&gt;6)]-alpha-D-GalNAc}-L-seryl-[protein] + CMP + H(+). It carries out the reaction 3-O-[alpha-Neu5Ac-(2-&gt;3)-beta-D-Gal-(1-&gt;3)-alpha-D-GalNAc]-L-Thr-[protein] + CMP-N-acetyl-beta-neuraminate = a 3-O-{alpha-Neu5Ac-(2-&gt;3)-beta-D-Gal-(1-&gt;3)-[alpha-Neu5Ac-(2-&gt;6)]-alpha-D-GalNAc}-L-threonyl-[protein] + CMP + H(+). Functionally, transfers the sialyl group (N-acetyl-alpha-neuraminyl or NeuAc) from CMP-NeuAc onto glycolipids, forming an alpha-2,6-linkage. Produces branched type disialyl structures by transfer of a sialyl group onto the GalNAc or GlcNAc residue inside backbone core chains having a terminal sialic acid with an alpha-2,3-linkage on Gal. ST6GalNAcVI prefers glycolipids to glycoproteins, predominantly catalyzing the biosynthesis of ganglioside GD1alpha from GM1b. Also has activity toward GD1a and GT1b, and can generate DSGG (disialylgalactosylgloboside) from MSGG (monosialylgalactosylgloboside). Besides GMb1, MSGG and other glycolipids, it shows activity towards sialyl Lc4Cer generating disialyl Lc4Cer, which can lead to the synthesis of disialyl Lewis a (Le(a)), suggested to be a cancer-associated antigen. This chain is Alpha-N-acetylgalactosaminide alpha-2,6-sialyltransferase 6 (St6galnac6), found in Mus musculus (Mouse).